We begin with the raw amino-acid sequence, 250 residues long: 5'-nucleotidase SurE (250 aa).

Positions 8, 9, 40, and 94 each coordinate a divalent metal cation.

Belongs to the SurE nucleotidase family. It depends on a divalent metal cation as a cofactor.

It localises to the cytoplasm. The enzyme catalyses a ribonucleoside 5'-phosphate + H2O = a ribonucleoside + phosphate. In terms of biological role, nucleotidase that shows phosphatase activity on nucleoside 5'-monophosphates. This Wolbachia pipientis wMel protein is 5'-nucleotidase SurE.